A 329-amino-acid chain; its full sequence is Epoxide hydrolase (329 aa).

In terms of domain architecture, AB hydrolase-1 spans 35 to 308; the sequence is PAVLFCHGFP…DNVGHWVQHE (274 aa). Catalysis depends on aspartate 111, which acts as the Nucleophile. The active-site Proton donor is tyrosine 242. Histidine 303 (proton acceptor) is an active-site residue.

This sequence belongs to the AB hydrolase superfamily. Epoxide hydrolase family. In terms of assembly, homodimer.

It catalyses the reaction an epoxide + H2O = an ethanediol. The catalysed reaction is (R)-styrene oxide + H2O = (R)-styrene glycol. The enzyme catalyses (S)-styrene oxide + H2O = (S)-styrene glycol. It carries out the reaction 3,4-epoxy-1-cyclohexene + H2O = cyclohex-3-ene-1,2-diol. Functionally, catalyzes the hydrolysis of various epoxides into diols. In vitro, shows the strongest activity toward aromatic and cyclic aliphatic epoxide compounds, since it shows strong activity toward (R)-styrene oxide, (S)-styrene oxide, and 3,4-epoxy-1-cyclohexene, but very weak activity toward (R)-epichlorohydrin, (S)-epichlorohydrin, and 1,2-epoxy-9-decene. The polypeptide is Epoxide hydrolase (Caballeronia sordidicola (Burkholderia sordidicola)).